The following is a 220-amino-acid chain: Ribosome assembly protein 3 (220 aa).

Positions 1 to 91 are disordered; sequence MSAGDISAIN…VSDVELTDEE (91 aa). Over residues 13 to 24 the composition is skewed to basic residues; that stretch reads SVKKNRRRKKRR. The segment covering 29–39 has biased composition (low complexity); the sequence is SSSDSSSSDPS. Over residues 41 to 72 the composition is skewed to basic and acidic residues; it reads ESEKEEIQNGAIEEHVGENGKSDHVFSKGNDE. Acidic residues predominate over residues 73–91; that stretch reads DKQEDIAIEVSDVELTDEE. Residue Ser83 is modified to Phosphoserine. At Thr88 the chain carries Phosphothreonine. At Ser99 the chain carries Phosphoserine.

It belongs to the RSA3 family. In terms of assembly, associates with nucleolar pre-ribosomal particles. Interacts with DBP6. Together with DBP6, NOP8, URB1 and URB2, forms an RNA-independent complex, which is required during early maturation of nascent 60S ribosomal subunits.

Its subcellular location is the nucleus. It is found in the nucleolus. In terms of biological role, required for efficient biogenesis of the 60S ribosomal subunit. This Saccharomyces cerevisiae (strain ATCC 204508 / S288c) (Baker's yeast) protein is Ribosome assembly protein 3 (RSA3).